A 271-amino-acid polypeptide reads, in one-letter code: Hydroxyethylthiazole kinase (271 aa).

Met-46 is a substrate binding site. Arg-122 and Thr-169 together coordinate ATP. Substrate is bound at residue Gly-196.

It belongs to the Thz kinase family. It depends on Mg(2+) as a cofactor.

It carries out the reaction 5-(2-hydroxyethyl)-4-methylthiazole + ATP = 4-methyl-5-(2-phosphooxyethyl)-thiazole + ADP + H(+). It functions in the pathway cofactor biosynthesis; thiamine diphosphate biosynthesis; 4-methyl-5-(2-phosphoethyl)-thiazole from 5-(2-hydroxyethyl)-4-methylthiazole: step 1/1. Functionally, catalyzes the phosphorylation of the hydroxyl group of 4-methyl-5-beta-hydroxyethylthiazole (THZ). The sequence is that of Hydroxyethylthiazole kinase from Alkaliphilus oremlandii (strain OhILAs) (Clostridium oremlandii (strain OhILAs)).